The primary structure comprises 237 residues: ATP synthase subunit a (237 aa).

5 consecutive transmembrane segments (helical) span residues 18–38 (LTLLAMSLLAVLLVFAFVYWA), 77–97 (SLFLFSLFLFLVVANNLGLMA), 114–134 (NIAFDLSMSFLITLICHVEGI), 167–187 (LALRIYGNIFAGEVLSGLLVT), and 208–230 (AFSVFISCVQAYVFTMLTSMYLG).

Belongs to the ATPase A chain family. F-type ATPases have 2 components, CF(1) - the catalytic core - and CF(0) - the membrane proton channel. CF(1) has five subunits: alpha(3), beta(3), gamma(1), delta(1), epsilon(1). CF(0) has three main subunits: a(1), b(2) and c(9-12). The alpha and beta chains form an alternating ring which encloses part of the gamma chain. CF(1) is attached to CF(0) by a central stalk formed by the gamma and epsilon chains, while a peripheral stalk is formed by the delta and b chains.

The protein localises to the cell membrane. Its function is as follows. Key component of the proton channel; it plays a direct role in the translocation of protons across the membrane. The protein is ATP synthase subunit a of Streptococcus gordonii (strain Challis / ATCC 35105 / BCRC 15272 / CH1 / DL1 / V288).